Consider the following 1437-residue polypeptide: IQ domain-containing protein N (1437 aa).

The region spanning 84-112 (SRAATVIQASWKGYRLRQKLISQMTAAKA) is the IQ 1 domain. Disordered stretches follow at residues 332–353 (TSPTSPVIRLPAPVGPNSSLSN), 416–440 (SQAQTYTVSTSSKTSPSSPTVKPSP), and 848–878 (STGSRAKPDDRSVAQPQLHSHAPNKTMQNPR). The segment covering 422–440 (TVSTSSKTSPSSPTVKPSP) has biased composition (low complexity). Polar residues predominate over residues 861-878 (AQPQLHSHAPNKTMQNPR). IQ domains follow at residues 1190-1216 (QAVVTIQACARGYLVRRTVKVWHQWAT), 1217-1239 (IIQATWRGYRVRRNLERLFRATT), 1240-1258 (IIQAAWRGYCIRRARARQV), 1361-1389 (QHRACTIIQAAWKGYRTRRQLSQKQSAAK), and 1390-1413 (MVQAVWRGHYTRSCLTTDALLGTG).

In terms of assembly, interacts with calmodulin. Expressed in testis, in elongating spermatids (at protein level).

Its function is as follows. Essential for spermiogenesis and fertilization. May be required for manchette assembly in elongating spermatids. In Mus musculus (Mouse), this protein is IQ domain-containing protein N (Iqcn).